A 416-amino-acid chain; its full sequence is Adenylosuccinate synthetase (416 aa).

GTP contacts are provided by residues 13–19 (GDEGKGK) and 41–43 (GHT). The active-site Proton acceptor is Asp14. Positions 14 and 41 each coordinate Mg(2+). IMP contacts are provided by residues 14–17 (DEGK), 39–42 (NAGH), Thr126, Arg140, Gln220, Thr235, and Arg299. The active-site Proton donor is the His42. 295–301 (TTTGRKR) lines the substrate pocket. GTP contacts are provided by residues Arg301, 327 to 329 (KLD), and 405 to 407 (STS).

It belongs to the adenylosuccinate synthetase family. Homodimer. Mg(2+) is required as a cofactor.

The protein resides in the cytoplasm. It carries out the reaction IMP + L-aspartate + GTP = N(6)-(1,2-dicarboxyethyl)-AMP + GDP + phosphate + 2 H(+). It functions in the pathway purine metabolism; AMP biosynthesis via de novo pathway; AMP from IMP: step 1/2. Functionally, plays an important role in the de novo pathway of purine nucleotide biosynthesis. Catalyzes the first committed step in the biosynthesis of AMP from IMP. The sequence is that of Adenylosuccinate synthetase from Campylobacter fetus subsp. fetus (strain 82-40).